A 672-amino-acid polypeptide reads, in one-letter code: uncharacterized protein (672 aa).

The span at 1–10 shows a compositional bias: basic and acidic residues; it reads MAKSDGDDPL. Residues 1-41 form a disordered region; that stretch reads MAKSDGDDPLRPASPRLRSSRRHSLRYSAYTGGPDPLAPPV.

This is an uncharacterized protein from Mycobacterium bovis (strain ATCC BAA-935 / AF2122/97).